The primary structure comprises 146 residues: D-aminoacyl-tRNA deacylase (146 aa).

Residues 137 to 138 (GP) carry the Gly-cisPro motif, important for rejection of L-amino acids motif.

Belongs to the DTD family. In terms of assembly, homodimer.

Its subcellular location is the cytoplasm. It carries out the reaction glycyl-tRNA(Ala) + H2O = tRNA(Ala) + glycine + H(+). The enzyme catalyses a D-aminoacyl-tRNA + H2O = a tRNA + a D-alpha-amino acid + H(+). Functionally, an aminoacyl-tRNA editing enzyme that deacylates mischarged D-aminoacyl-tRNAs. Also deacylates mischarged glycyl-tRNA(Ala), protecting cells against glycine mischarging by AlaRS. Acts via tRNA-based rather than protein-based catalysis; rejects L-amino acids rather than detecting D-amino acids in the active site. By recycling D-aminoacyl-tRNA to D-amino acids and free tRNA molecules, this enzyme counteracts the toxicity associated with the formation of D-aminoacyl-tRNA entities in vivo and helps enforce protein L-homochirality. The sequence is that of D-aminoacyl-tRNA deacylase from Hahella chejuensis (strain KCTC 2396).